The following is a 539-amino-acid chain: Phosphoenolpyruvate carboxykinase (ATP) (539 aa).

3 residues coordinate substrate: Arg64, Tyr206, and Lys212. ATP contacts are provided by residues Lys212, His231, and 247-255 (GLSGTGKTT). Lys212 and His231 together coordinate Mn(2+). Asp268 contributes to the Mn(2+) binding site. ATP is bound by residues Glu296, Arg332, 448–449 (RI), and Thr454. Arg332 contacts substrate.

This sequence belongs to the phosphoenolpyruvate carboxykinase (ATP) family. As to quaternary structure, monomer. Requires Mn(2+) as cofactor.

It localises to the cytoplasm. The enzyme catalyses oxaloacetate + ATP = phosphoenolpyruvate + ADP + CO2. It functions in the pathway carbohydrate biosynthesis; gluconeogenesis. Functionally, involved in the gluconeogenesis. Catalyzes the conversion of oxaloacetate (OAA) to phosphoenolpyruvate (PEP) through direct phosphoryl transfer between the nucleoside triphosphate and OAA. This chain is Phosphoenolpyruvate carboxykinase (ATP), found in Sodalis glossinidius (strain morsitans).